A 136-amino-acid chain; its full sequence is Prefoldin subunit alpha (136 aa).

Belongs to the prefoldin subunit alpha family. As to quaternary structure, heterohexamer of two alpha and four beta subunits.

The protein resides in the cytoplasm. Functionally, molecular chaperone capable of stabilizing a range of proteins. Seems to fulfill an ATP-independent, HSP70-like function in archaeal de novo protein folding. The polypeptide is Prefoldin subunit alpha (Pyrobaculum arsenaticum (strain DSM 13514 / JCM 11321 / PZ6)).